A 328-amino-acid chain; its full sequence is DNA repair and recombination protein RadA (328 aa).

118–125 lines the ATP pocket; that stretch reads GEYGSGKT.

It belongs to the eukaryotic RecA-like protein family.

Involved in DNA repair and in homologous recombination. Binds and assemble on single-stranded DNA to form a nucleoprotein filament. Hydrolyzes ATP in a ssDNA-dependent manner and promotes DNA strand exchange between homologous DNA molecules. The polypeptide is DNA repair and recombination protein RadA (Desulfurococcus amylolyticus (strain DSM 18924 / JCM 16383 / VKM B-2413 / 1221n) (Desulfurococcus kamchatkensis)).